We begin with the raw amino-acid sequence, 85 residues long: Small ribosomal subunit protein bS16c (85 aa).

This sequence belongs to the bacterial ribosomal protein bS16 family.

It localises to the plastid. The protein localises to the chloroplast. The protein is Small ribosomal subunit protein bS16c of Cucumis sativus (Cucumber).